The primary structure comprises 303 residues: Coenzyme PQQ synthesis protein B (303 aa).

This sequence belongs to the PqqB family.

The protein operates within cofactor biosynthesis; pyrroloquinoline quinone biosynthesis. Its function is as follows. May be involved in the transport of PQQ or its precursor to the periplasm. This chain is Coenzyme PQQ synthesis protein B, found in Pseudomonas syringae pv. tomato (strain ATCC BAA-871 / DC3000).